The chain runs to 147 residues: Large ribosomal subunit protein uL11 (147 aa).

It belongs to the universal ribosomal protein uL11 family. In terms of assembly, part of the ribosomal stalk of the 50S ribosomal subunit. Interacts with L10 and the large rRNA to form the base of the stalk. L10 forms an elongated spine to which L12 dimers bind in a sequential fashion forming a multimeric L10(L12)X complex. Post-translationally, one or more lysine residues are methylated.

In terms of biological role, forms part of the ribosomal stalk which helps the ribosome interact with GTP-bound translation factors. This Bacteroides fragilis (strain ATCC 25285 / DSM 2151 / CCUG 4856 / JCM 11019 / LMG 10263 / NCTC 9343 / Onslow / VPI 2553 / EN-2) protein is Large ribosomal subunit protein uL11.